The primary structure comprises 325 residues: Holliday junction branch migration complex subunit RuvB (325 aa).

The tract at residues 1–172 is large ATPase domain (RuvB-L); that stretch reads MENNELLDIT…FGVVFRLEFY (172 aa). ATP is bound by residues leucine 11, arginine 12, glycine 53, lysine 56, threonine 57, threonine 58, 119–121, arginine 162, tyrosine 172, and arginine 209; that span reads EDF. Threonine 57 is a Mg(2+) binding site. Positions 173–243 are small ATPAse domain (RuvB-S); sequence NSEELKEIVK…IAQEALIAMD (71 aa). The interval 246 to 325 is head domain (RuvB-H); the sequence is DYGLDDMDRK…LKRKIPERLF (80 aa). 2 residues coordinate DNA: arginine 301 and arginine 306.

Belongs to the RuvB family. As to quaternary structure, homohexamer. Forms an RuvA(8)-RuvB(12)-Holliday junction (HJ) complex. HJ DNA is sandwiched between 2 RuvA tetramers; dsDNA enters through RuvA and exits via RuvB. An RuvB hexamer assembles on each DNA strand where it exits the tetramer. Each RuvB hexamer is contacted by two RuvA subunits (via domain III) on 2 adjacent RuvB subunits; this complex drives branch migration. In the full resolvosome a probable DNA-RuvA(4)-RuvB(12)-RuvC(2) complex forms which resolves the HJ.

The protein resides in the cytoplasm. It catalyses the reaction ATP + H2O = ADP + phosphate + H(+). Its function is as follows. The RuvA-RuvB-RuvC complex processes Holliday junction (HJ) DNA during genetic recombination and DNA repair, while the RuvA-RuvB complex plays an important role in the rescue of blocked DNA replication forks via replication fork reversal (RFR). RuvA specifically binds to HJ cruciform DNA, conferring on it an open structure. The RuvB hexamer acts as an ATP-dependent pump, pulling dsDNA into and through the RuvAB complex. RuvB forms 2 homohexamers on either side of HJ DNA bound by 1 or 2 RuvA tetramers; 4 subunits per hexamer contact DNA at a time. Coordinated motions by a converter formed by DNA-disengaged RuvB subunits stimulates ATP hydrolysis and nucleotide exchange. Immobilization of the converter enables RuvB to convert the ATP-contained energy into a lever motion, pulling 2 nucleotides of DNA out of the RuvA tetramer per ATP hydrolyzed, thus driving DNA branch migration. The RuvB motors rotate together with the DNA substrate, which together with the progressing nucleotide cycle form the mechanistic basis for DNA recombination by continuous HJ branch migration. Branch migration allows RuvC to scan DNA until it finds its consensus sequence, where it cleaves and resolves cruciform DNA. The polypeptide is Holliday junction branch migration complex subunit RuvB (Thermodesulfovibrio yellowstonii (strain ATCC 51303 / DSM 11347 / YP87)).